Here is a 227-residue protein sequence, read N- to C-terminus: PKHD-type hydroxylase Patl_2273 (227 aa).

Residues 78–178 form the Fe2OG dioxygenase domain; it reads KIYPPKFNRY…RTASFFWIES (101 aa). The Fe cation site is built by histidine 96, aspartate 98, and histidine 159. Residue arginine 169 participates in 2-oxoglutarate binding.

The cofactor is Fe(2+). Requires L-ascorbate as cofactor.

In Pseudoalteromonas atlantica (strain T6c / ATCC BAA-1087), this protein is PKHD-type hydroxylase Patl_2273.